We begin with the raw amino-acid sequence, 128 residues long: Ribonuclease pancreatic (128 aa).

The segment covering 1-15 has biased composition (basic and acidic residues); sequence SESSAKKFERQHMDS. The segment at 1 to 28 is disordered; the sequence is SESSAKKFERQHMDSRGSPSTNPNYCNE. Residues Lys-7 and Arg-10 each coordinate substrate. His-12 (proton acceptor) is an active-site residue. Intrachain disulfides connect Cys-26–Cys-84, Cys-40–Cys-95, Cys-58–Cys-110, and Cys-65–Cys-72. A glycan (N-linked (GlcNAc...) asparagine) is linked at Asn-34. Residues 41 to 45, Lys-66, and Arg-85 each bind substrate; that span reads KPVNT. Catalysis depends on His-119, which acts as the Proton donor.

It belongs to the pancreatic ribonuclease family. In terms of assembly, monomer. Interacts with and forms tight 1:1 complexes with RNH1. Dimerization of two such complexes may occur. Interaction with RNH1 inhibits this protein. Pancreas.

The protein localises to the secreted. The enzyme catalyses an [RNA] containing cytidine + H2O = an [RNA]-3'-cytidine-3'-phosphate + a 5'-hydroxy-ribonucleotide-3'-[RNA].. It catalyses the reaction an [RNA] containing uridine + H2O = an [RNA]-3'-uridine-3'-phosphate + a 5'-hydroxy-ribonucleotide-3'-[RNA].. In terms of biological role, endonuclease that catalyzes the cleavage of RNA on the 3' side of pyrimidine nucleotides. Acts on single-stranded and double-stranded RNA. The chain is Ribonuclease pancreatic (RNASE1) from Myocastor coypus (Coypu).